A 115-amino-acid polypeptide reads, in one-letter code: UPF0122 protein NT01CX_2214 (115 aa).

Belongs to the UPF0122 family.

In terms of biological role, might take part in the signal recognition particle (SRP) pathway. This is inferred from the conservation of its genetic proximity to ftsY/ffh. May be a regulatory protein. The polypeptide is UPF0122 protein NT01CX_2214 (Clostridium novyi (strain NT)).